A 167-amino-acid chain; its full sequence is MSTIPSEIINWTILNEIISMDDDDSDFSKGLIIQFIDQAQTTFAQMQRQLDGEKNLTELDNLGHFLKGSSAALGLQRIAWVCERIQNLGRKMEHFFPNKTELVNTLSDKSIINGINIDEDDEEIKIQVDDKDENSIYLILIAKALNQSRLEFKLARIELSKYYNTNL.

In terms of domain architecture, HPt spans Asp-24–Asp-129. The residue at position 64 (His-64) is a Phosphohistidine.

Belongs to the YPD1 family. Interacts with the response regulatory domains of SLN1 and SSK1. In terms of processing, the phosphorelay mechanism involves the sequential transfer of a phosphate group from 'His-576' (H1) to 'Asp-1144' (D1) of SLN1, then to His-64 (H2) of YPD1 and finally to 'Asp-554' (D2) of SSK1 or 'Asp-427' (D2) of SKN7.

Its subcellular location is the cytoplasm. It is found in the nucleus. Phosphorelay intermediate protein that is part of the branched SLN1-YPD1-SKN7/SSK1 two-component regulatory system, which controls activity of the HOG1 pathway and gene expression in response to changes in the osmolarity of the extracellular environment. Catalyzes the phosphoryl group transfer from the membrane-bound osmosensing histidine kinase SLN1 to two distinct response regulator proteins, SSK1 in the cytoplasm, and transcription factor SKN7 in the nucleus. The chain is Phosphorelay intermediate protein YPD1 (YPD1) from Saccharomyces cerevisiae (strain ATCC 204508 / S288c) (Baker's yeast).